The following is a 1407-amino-acid chain: JmjC domain-containing histone demethylation protein 1 (1407 aa).

Disordered regions lie at residues 1–86 (MISA…SSTI) and 98–151 (PTFT…NAFS). Composition is skewed to basic and acidic residues over residues 55–67 (DHVR…KRPS) and 125–140 (PVER…RDES). The segment covering 141 to 150 (SYTQHRSNAF) has biased composition (polar residues). A PHD-type zinc finger spans residues 323-382 (QASCATCNLVRIPVDNEDQDVTWISCDGCKRWFHIVCAGFKNDRETRTVDKFICKTCRPI). The 159-residue stretch at 577-735 (VSQSKLGRLI…MQIKIAKIEK (159 aa)) folds into the JmjC domain. T628 is a binding site for substrate. The Fe cation site is built by H631 and D633. K648 lines the substrate pocket. Fe cation is bound at residue H703. Disordered regions lie at residues 893–987 (KLSL…LGPK), 1004–1027 (KEEN…HHTP), 1122–1183 (IKAQ…QDSV), and 1252–1389 (DEMD…SLRL). Basic and acidic residues-rich tracts occupy residues 896 to 914 (LAEK…RNAD) and 928 to 938 (LSERPAVDIQK). Residues 1008–1027 (NGASGSQMTVSTSSLGHHTP) are compositionally biased toward polar residues. The span at 1254 to 1264 (MDIHDQVDAGG) shows a compositional bias: basic and acidic residues. Residues 1273–1284 (PSSGSRQSSRQP) show a composition bias toward low complexity. Positions 1285–1296 (RQVERYMPEVHF) are enriched in basic and acidic residues. Residues 1297–1349 (AKTAKSTTTTPQTTRRSSFGSSGRKTTPGLSSGSKKSGSRPSSSHGKKSLSPS) show a composition bias toward low complexity.

The protein belongs to the JHDM1 histone demethylase family. Fe(2+) is required as a cofactor.

The protein resides in the nucleus. The catalysed reaction is N(6),N(6)-dimethyl-L-lysyl(36)-[histone H3] + 2 2-oxoglutarate + 2 O2 = L-lysyl(36)-[histone H3] + 2 formaldehyde + 2 succinate + 2 CO2. Histone demethylase that specifically demethylates 'Lys-36' of histone H3, thereby playing a central role in histone code. The protein is JmjC domain-containing histone demethylation protein 1 (jhd1) of Emericella nidulans (strain FGSC A4 / ATCC 38163 / CBS 112.46 / NRRL 194 / M139) (Aspergillus nidulans).